A 636-amino-acid chain; its full sequence is Polyadenylate-binding protein 1 (636 aa).

Position 1 is an N-acetylmethionine (Met1). RRM domains are found at residues 11-89 (ASLY…WSQR), 99-175 (GNIF…RFKS), 191-268 (TNVY…RAQK), and 294-370 (VNLY…LAQR). The CSDE1-binding stretch occupies residues 166 to 289 (RKVFVGRFKS…FEQMKQDRIT (124 aa)). An N6-methyllysine modification is found at Lys299. Phosphoserine is present on Ser315. Residue Thr319 is modified to Phosphothreonine. Residues Arg385, Arg419, Arg432, and Arg436 each carry the omega-N-methylarginine modification. Arg455 and Arg460 each carry omega-N-methylated arginine; by CARM1. 2 positions are modified to omega-N-methylarginine: Arg475 and Arg481. Arg493 is subject to Asymmetric dimethylarginine; alternate. Arg493 is subject to Dimethylated arginine; alternate. Position 493 is an omega-N-methylarginine; alternate (Arg493). The residue at position 506 (Arg506) is an Omega-N-methylarginine. Position 512 is an N6-acetyllysine (Lys512). Arg518 bears the Omega-N-methylarginine mark. The PABC domain occupies 542–619 (QEPLTASMLA…AVAVLQAHQA (78 aa)).

This sequence belongs to the polyadenylate-binding protein type-1 family. May form homodimers. Component of a multisubunit autoregulatory ribonucleoprotein complex (ARC), at least composed of IGF2BP1, PABPC1 and CSDE1. Directly interacts with IGF2BP1. Part of a complex associated with the FOS mCRD domain and consisting of HNRPD, SYNCRIP, PAIP1 and CSDE1/UNR. Interacts with PAIP1 and PAIP2 (via the PABPC1-interacting motifs PAM1 and PAM2). Interacts with PAIP1 with a 1:1 stoichiometry and with PAIP2 with a 1:2 stoichiometry. The interaction with CSDE1 is direct and RNA-independent. Found in a mRNP complex with YBX2. Interacts with TENT2/GLD2. Identified in the spliceosome C complex. Identified in a mRNP complex, at least composed of DHX9, DDX3X, ELAVL1, HNRNPU, IGF2BP1, ILF3, PABPC1, PCBP2, PTBP2, STAU1, STAU2, SYNCRIP and YBX1. The interaction with DDX3X is direct and RNA-independent. This interaction increases in stressed cells and decreases during cell recovery. Identified in a IGF2BP1-dependent mRNP granule complex containing untranslated mRNAs. Interacts with NXF1/TAP. Interacts with PIWIL1. Interacts with AGO1, AGO2, GSPT1 and GSPT2. Interacts with LARP4B. Interacts (via the second and third RRM domains and the C-terminus) with PAIP2B (via central acidic portion and C-terminus). Forms a complex with LARP1 and SHFL. Interacts with LARP4. Interacts with ZFC3H1 in a RNase-sensitive manner. Interacts with TRIM71 (via NHL repeats) in an RNA-dependent manner. Interacts with TENT5C; the interaction has no effect on TENT5C poly(A) polymerase function. Interacts with G3BP1 and G3BP2. Interacts with ENDOV; the interaction is RNA-dependent and stimulates ENDOV activity. Interacts with UPF1; the interaction is RNA-dependent. Interacts with IGF2BP2 and IGF2BP3. May interact with SETX. Interacts with RBM46. Interacts with PAN3. Post-translationally, phosphorylated by MAPKAPK2. In terms of processing, methylated by CARM1. Arg-493 is dimethylated, probably to asymmetric dimethylarginine.

It is found in the cytoplasm. Its subcellular location is the stress granule. It localises to the nucleus. The protein resides in the cell projection. The protein localises to the lamellipodium. Functionally, binds the poly(A) tail of mRNA, including that of its own transcript, and regulates processes of mRNA metabolism such as pre-mRNA splicing and mRNA stability. Its function in translational initiation regulation can either be enhanced by PAIP1 or repressed by PAIP2. Can probably bind to cytoplasmic RNA sequences other than poly(A) in vivo. Binds to N6-methyladenosine (m6A)-containing mRNAs and contributes to MYC stability by binding to m6A-containing MYC mRNAs. Involved in translationally coupled mRNA turnover. Implicated with other RNA-binding proteins in the cytoplasmic deadenylation/translational and decay interplay of the FOS mRNA mediated by the major coding-region determinant of instability (mCRD) domain. Involved in regulation of nonsense-mediated decay (NMD) of mRNAs containing premature stop codons; for the recognition of premature termination codons (PTC) and initiation of NMD a competitive interaction between UPF1 and PABPC1 with the ribosome-bound release factors is proposed. By binding to long poly(A) tails, may protect them from uridylation by ZCCHC6/ZCCHC11 and hence contribute to mRNA stability. The chain is Polyadenylate-binding protein 1 (PABPC1) from Pongo abelii (Sumatran orangutan).